Here is a 416-residue protein sequence, read N- to C-terminus: 3-phosphoshikimate 1-carboxyvinyltransferase (416 aa).

3-phosphoshikimate is bound by residues Lys-20, Ser-21, and Arg-25. Lys-20 serves as a coordination point for phosphoenolpyruvate. Residues Gly-88 and Arg-116 each coordinate phosphoenolpyruvate. Ser-159, Ser-160, Gln-161, Ser-186, Asp-300, and Lys-327 together coordinate 3-phosphoshikimate. Gln-161 serves as a coordination point for phosphoenolpyruvate. The active-site Proton acceptor is the Asp-300. Phosphoenolpyruvate-binding residues include Arg-331 and Arg-373.

This sequence belongs to the EPSP synthase family. As to quaternary structure, monomer.

It localises to the cytoplasm. The enzyme catalyses 3-phosphoshikimate + phosphoenolpyruvate = 5-O-(1-carboxyvinyl)-3-phosphoshikimate + phosphate. The protein operates within metabolic intermediate biosynthesis; chorismate biosynthesis. In terms of biological role, catalyzes the transfer of the enolpyruvyl moiety of phosphoenolpyruvate (PEP) to the 5-hydroxyl of shikimate-3-phosphate (S3P) to produce enolpyruvyl shikimate-3-phosphate and inorganic phosphate. The protein is 3-phosphoshikimate 1-carboxyvinyltransferase of Archaeoglobus fulgidus (strain ATCC 49558 / DSM 4304 / JCM 9628 / NBRC 100126 / VC-16).